The sequence spans 85 residues: Small ribosomal subunit protein bS16 (85 aa).

It belongs to the bacterial ribosomal protein bS16 family.

This Pelobacter propionicus (strain DSM 2379 / NBRC 103807 / OttBd1) protein is Small ribosomal subunit protein bS16.